We begin with the raw amino-acid sequence, 73 residues long: Translation initiation factor IF-1 (73 aa).

One can recognise an S1-like domain in the interval 1-73 (MAKKEDTIVL…TKARVVYRHR (73 aa)).

The protein belongs to the IF-1 family. Component of the 30S ribosomal translation pre-initiation complex which assembles on the 30S ribosome in the order IF-2 and IF-3, IF-1 and N-formylmethionyl-tRNA(fMet); mRNA recruitment can occur at any time during PIC assembly.

The protein localises to the cytoplasm. One of the essential components for the initiation of protein synthesis. Stabilizes the binding of IF-2 and IF-3 on the 30S subunit to which N-formylmethionyl-tRNA(fMet) subsequently binds. Helps modulate mRNA selection, yielding the 30S pre-initiation complex (PIC). Upon addition of the 50S ribosomal subunit IF-1, IF-2 and IF-3 are released leaving the mature 70S translation initiation complex. The sequence is that of Translation initiation factor IF-1 from Chlamydia caviae (strain ATCC VR-813 / DSM 19441 / 03DC25 / GPIC) (Chlamydophila caviae).